Here is a 60-residue protein sequence, read N- to C-terminus: Hemocyte defensin Cg-Defh2 (60 aa).

The N-terminal stretch at 1–17 (LLTLAVLLMVSADMAFA) is a signal peptide. Phe19, Gly20, and Cys21 together coordinate beta-D-GlcNAc-(1-&gt;4)-Mur2Ac(oyl-L-Ala-gamma-D-Glu-L-Lys-D-Ala-D-Ala)-di-trans,octa-cis-undecaprenyl diphosphate. Intrachain disulfides connect Cys21-Cys42, Cys28-Cys51, Cys32-Cys53, and Cys37-Cys56. Positions 22–25 (PGDQ) are binds to membrane interface. Beta-D-GlcNAc-(1-&gt;4)-Mur2Ac(oyl-L-Ala-gamma-D-Glu-L-Lys-D-Ala-D-Ala)-di-trans,octa-cis-undecaprenyl diphosphate is bound at residue His31. The interval 43-49 (DAVTLWL) is binds to membrane interface. Cys51 provides a ligand contact to beta-D-GlcNAc-(1-&gt;4)-Mur2Ac(oyl-L-Ala-gamma-D-Glu-L-Lys-D-Ala-D-Ala)-di-trans,octa-cis-undecaprenyl diphosphate.

The protein belongs to the invertebrate defensin family. Expressed in hemocytes.

The protein resides in the secreted. It localises to the target cell membrane. In terms of biological role, antibacterial peptide mostly active against Gram-positive bacteria. It acts by selectively inhibiting peptidoglycan biosynthesis through complex formation with the cell wall precursor lipid II (1:1 molar ratio) thus inhibiting cell wall synthesis. It does not disrupt cell membranes. Is noticeably more potent than Cg-Defh1. In Magallana gigas (Pacific oyster), this protein is Hemocyte defensin Cg-Defh2.